Reading from the N-terminus, the 785-residue chain is Phenylalanine--tRNA ligase beta subunit (785 aa).

In terms of domain architecture, tRNA-binding spans Cys38–Phe150. One can recognise a B5 domain in the interval Val394–Glu470. 4 residues coordinate Mg(2+): Asp448, Asp454, Glu457, and Glu458. One can recognise an FDX-ACB domain in the interval Ser690–Arg783.

This sequence belongs to the phenylalanyl-tRNA synthetase beta subunit family. Type 1 subfamily. As to quaternary structure, tetramer of two alpha and two beta subunits. Mg(2+) serves as cofactor.

Its subcellular location is the cytoplasm. It carries out the reaction tRNA(Phe) + L-phenylalanine + ATP = L-phenylalanyl-tRNA(Phe) + AMP + diphosphate + H(+). The sequence is that of Phenylalanine--tRNA ligase beta subunit from Ehrlichia canis (strain Jake).